The primary structure comprises 593 residues: Efflux pump FUB11 (593 aa).

Residues 1 to 45 (MAIDPQPSSPSLSSETIANDTIGNDNNVNEPSVEPKTQEHQHTVP) form a disordered region. The span at 9–30 (SPSLSSETIANDTIGNDNNVNE) shows a compositional bias: polar residues. Asn19 is a glycosylation site (N-linked (GlcNAc...) asparagine). The next 12 membrane-spanning stretches (helical) occupy residues 98–118 (WAFV…SSAY), 135–155 (VATL…LVWA), 167–187 (FFFT…AGSI), 195–215 (FLTG…IADM), 227–247 (MFSG…GFLG), 254–274 (WLHG…TVFI), 337–357 (IYIS…PIVF), 367–387 (IGGL…ISFA), 410–430 (LPPA…FAWT), 438–458 (IVPI…FMAL), 468–488 (IFAA…GAAF), and 503–523 (WASS…FLFY). The disordered stretch occupies residues 570 to 593 (THNSHASAAHSHGHRRSLSYTRSA).

It belongs to the major facilitator superfamily. DHA1 family. Polyamines/proton antiporter (TC 2.A.1.2.16) subfamily.

It localises to the cell membrane. Its function is as follows. Efflux pump involved in export of fusaric acid, a mycotoxin with low to moderate toxicity to animals and humans, but with high phytotoxic properties. Constitutes a self-protecting mechanism of the fungus against critical levels of FSA within the cell. The protein is Efflux pump FUB11 of Gibberella moniliformis (strain M3125 / FGSC 7600) (Maize ear and stalk rot fungus).